Consider the following 151-residue polypeptide: Large ribosomal subunit protein bL9 (151 aa).

The protein belongs to the bacterial ribosomal protein bL9 family.

Functionally, binds to the 23S rRNA. The protein is Large ribosomal subunit protein bL9 of Thermosipho africanus (strain TCF52B).